We begin with the raw amino-acid sequence, 486 residues long: MSKVTKQSKSHKSSELVSLAEKIKQKALENRKQSREESQATEEANTASETEAAVIEETAEPEEGFSSFRELDLVPELIEACDNLNFTKPTPIQSKAIPPALQGKDIIGLAQTGSGKTAAFAIPILNRLWHDQQPYYACILAPTRELAQQIKETFDSLGSLMGVRTTCIVGGMNMMDQARDLMRKPHIIIATPGRLMDHLENTKGFALRKLQFLVMDEADRLLDMEFGPVLDRILKNIPTKGRTTYLFSATMTSKIDKLQRASLTNPVKCAVSNKYQTVDTLVQTLIVVPGGLKNTFLIYLLNEFIGKTTIVFTRTKANAERISGLCNLLEFSATALHGDLNQNQRTGALDLFKAGKKSILVATDVAARGLDIPSVDLVINYDIPVDSKSYIHRVGRTARAGRSGKSVSLVSQYDLELILRIEEVLGKKLPKENVDKSIVLSLRDSVDKANGEVIMELNRRNKEKQTRGKGRRSRTATRENMDKEEE.

The span at 1–11 shows a compositional bias: basic residues; that stretch reads MSKVTKQSKSH. The segment at 1–52 is disordered; the sequence is MSKVTKQSKSHKSSELVSLAEKIKQKALENRKQSREESQATEEANTASETEA. A coiled-coil region spans residues 17 to 49; the sequence is VSLAEKIKQKALENRKQSREESQATEEANTASE. A compositionally biased stretch (basic and acidic residues) spans 21–38; that stretch reads EKIKQKALENRKQSREES. The span at 41 to 52 shows a compositional bias: low complexity; sequence TEEANTASETEA. The Q motif signature appears at 66-94; that stretch reads SSFRELDLVPELIEACDNLNFTKPTPIQS. The Helicase ATP-binding domain maps to 97-269; that stretch reads IPPALQGKDI…RASLTNPVKC (173 aa). 110 to 117 serves as a coordination point for ATP; the sequence is AQTGSGKT. The DEAD box signature appears at 216–219; the sequence is DEAD. Positions 300–446 constitute a Helicase C-terminal domain; that stretch reads LLNEFIGKTT…SIVLSLRDSV (147 aa). The tract at residues 459 to 486 is disordered; that stretch reads RRNKEKQTRGKGRRSRTATRENMDKEEE. The segment covering 476 to 486 has biased composition (basic and acidic residues); the sequence is ATRENMDKEEE.

This sequence belongs to the DEAD box helicase family. DDX47/RRP3 subfamily. In terms of assembly, interacts with the SSU processome.

The protein resides in the nucleus. The catalysed reaction is ATP + H2O = ADP + phosphate + H(+). Its function is as follows. ATP-dependent rRNA helicase required for pre-ribosomal RNA processing. Involved in the maturation of the 35S-pre-rRNA and to its cleavage to mature 18S rRNA. The sequence is that of ATP-dependent rRNA helicase RRP3 from Eremothecium gossypii (strain ATCC 10895 / CBS 109.51 / FGSC 9923 / NRRL Y-1056) (Yeast).